The chain runs to 362 residues: Diphosphomevalonate decarboxylase (362 aa).

(R)-5-diphosphomevalonate-binding positions include 17 to 20, Arg72, 150 to 155, and Thr206; these read YWGK and SGSACR.

This sequence belongs to the diphosphomevalonate decarboxylase family. In terms of assembly, homodimer.

It carries out the reaction (R)-5-diphosphomevalonate + ATP = isopentenyl diphosphate + ADP + phosphate + CO2. Its pathway is isoprenoid biosynthesis; isopentenyl diphosphate biosynthesis via mevalonate pathway; isopentenyl diphosphate from (R)-mevalonate: step 3/3. Its function is as follows. Diphosphomevalonate decarboxylase; part of the second module of ergosterol biosynthesis pathway that includes the middle steps of the pathway. MVD1 converts diphosphomevalonate into isopentenyl diphosphate. The second module is carried out in the vacuole and involves the formation of farnesyl diphosphate, which is also an important intermediate in the biosynthesis of ubiquinone, dolichol, heme and prenylated proteins. Activity by the mevalonate kinase ERG12 first converts mevalonate into 5-phosphomevalonate. 5-phosphomevalonate is then further converted to 5-diphosphomevalonate by the phosphomevalonate kinase ERG8. The diphosphomevalonate decarboxylase MVD then produces isopentenyl diphosphate. The isopentenyl-diphosphate delta-isomerase IDI1 then catalyzes the 1,3-allylic rearrangement of the homoallylic substrate isopentenyl (IPP) to its highly electrophilic allylic isomer, dimethylallyl diphosphate (DMAPP). Finally the farnesyl diphosphate synthase ERG20 catalyzes the sequential condensation of isopentenyl pyrophosphate with dimethylallyl pyrophosphate, and then with the resultant geranylpyrophosphate to the ultimate product farnesyl pyrophosphate. The chain is Diphosphomevalonate decarboxylase from Candida albicans (strain SC5314 / ATCC MYA-2876) (Yeast).